A 665-amino-acid polypeptide reads, in one-letter code: MLSNSTFHEHHAKSHFHNNACQSNASSSACRASEDHLVSSFPNDSIIDLQPSRPAPEPPKKKFGYYARRLSGHFLSLIHGSGNSTRSPPFHLQNQKSNGQSEVWHSSDDSGSPKRLNRSRSSKEDMYRRRSLHGLPSLSRRNSKKSSTLSRSISLHLRSESAPISLPIHLYKSYSYNHSPSSLPTVLNSQALSSPPVPTTPDEVSTNRLSSSTSSMNCRNLVPDNFNISIRPNTTNYRSSIQENSNGNRDSISPSAYDAPLLHNVDTQSIDGFVSVASHFSSASTAESLDDGHSATTIQQGDVSSYPLSRSVSTPVPMSPISISPAKPSPQSPKLSQSAVGHPSSSIPAAAMHKVSYSDDLMRFVAREKYYLQIVDCLCTQKDPLFFYTDFTKICQQDTVGTYVARQTLDKEVVVIKRFDISAVTHRRLLLEELQRLSGLSHKNLIRYNESFWYLNNIWSVFEYKDPSTKLSALIPKYFFSELNIASICYEISSGLAFLHNSGIAHHNLTTECIYLTKSSCLKIGNYAFSSPYIERQTNRGAVSHVPDWLIEKNYKEGFMKDVKSLGLVALEIFQGQPNFFRKSIQSIQLTPNANVLVNRVRGLISQEFKEFLLQTLQAETLQGPNINMLLETSSFLEKRQTLNFEICLNNLNLRERKASRYSYL.

4 disordered regions span residues 42 to 63 (PNDSIIDLQPSRPAPEPPKKKF), 82 to 152 (GNST…LSRS), 187 to 217 (LNSQALSSPPVPTTPDEVSTNRLSSSTSSMN), and 286 to 343 (AESL…VGHP). The segment covering 82–104 (GNSTRSPPFHLQNQKSNGQSEVW) has biased composition (polar residues). 2 stretches are compositionally biased toward low complexity: residues 137 to 152 (SLSRRNSKKSSTLSRS) and 206 to 217 (TNRLSSSTSSMN). Over residues 294–316 (SATTIQQGDVSSYPLSRSVSTPV) the composition is skewed to polar residues. S358 is subject to Phosphoserine. The Protein kinase domain occupies 388 to 637 (YTDFTKICQQ…NMLLETSSFL (250 aa)). Residues 394–402 (ICQQDTVGT) and K417 each bind ATP.

It localises to the cytoplasm. This is Protein kinase domain-containing protein ppk2 (ppk2) from Schizosaccharomyces pombe (strain 972 / ATCC 24843) (Fission yeast).